Consider the following 421-residue polypeptide: MLDIQLIRHNLAQTKQKLALRSKGLETLLDHIFELDFKKRSLQSEIEKYRALRNKQSKEIGLKKIKGENVEGQFSELKKMGSRIEEMEKELIQFENQINTLLLSLPNIPHDSVPTGGPEANKVVKTWGEPRQANFPLKTHWELGRELGILDLERGAKLSGSGFSLFTGNGAKLQRALIQFMLTIHTEEHGYKELWPPYLVTEDCMRGTGHLPKFALDMYATDKDNLYLIPTGEVPLTNFHRDEILAESSLPLRYVAYTPCFRREAGSAGKDTRGLLRLHQFDKVELVQITKPENSYTALEEMVSHAENILRSLNLCYRVVLLASQDMGFGAAKCYDLEVWSPGIQSWLEVSSVSNMENFQSRRMNLRYKSSSGKNILCHTLNGSGTALPRLVAAILENYQKEDGRVLIPEKIRTYFKEEYL.

Threonine 231–glutamate 233 contributes to the L-serine binding site. Arginine 262 to glutamate 264 contributes to the ATP binding site. An L-serine-binding site is contributed by glutamate 285. Glutamate 349–serine 352 is an ATP binding site. Serine 384 contacts L-serine.

The protein belongs to the class-II aminoacyl-tRNA synthetase family. Type-1 seryl-tRNA synthetase subfamily. In terms of assembly, homodimer. The tRNA molecule binds across the dimer.

It localises to the cytoplasm. It catalyses the reaction tRNA(Ser) + L-serine + ATP = L-seryl-tRNA(Ser) + AMP + diphosphate + H(+). It carries out the reaction tRNA(Sec) + L-serine + ATP = L-seryl-tRNA(Sec) + AMP + diphosphate + H(+). It functions in the pathway aminoacyl-tRNA biosynthesis; selenocysteinyl-tRNA(Sec) biosynthesis; L-seryl-tRNA(Sec) from L-serine and tRNA(Sec): step 1/1. Catalyzes the attachment of serine to tRNA(Ser). Is also able to aminoacylate tRNA(Sec) with serine, to form the misacylated tRNA L-seryl-tRNA(Sec), which will be further converted into selenocysteinyl-tRNA(Sec). This is Serine--tRNA ligase from Methylacidiphilum infernorum (isolate V4) (Methylokorus infernorum (strain V4)).